A 474-amino-acid polypeptide reads, in one-letter code: Chromosomal replication initiator protein DnaA (474 aa).

The interval 1–90 is domain I, interacts with DnaA modulators; it reads MSSSLWLQCL…RQVVVPSSQI (90 aa). Positions 91 to 137 are domain II; the sequence is IAPAAPAVTLAPRPLPATRILQDDAPSRSWEPAPSPVQPESKSGYRS. Residues 112–137 are disordered; the sequence is QDDAPSRSWEPAPSPVQPESKSGYRS. Over residues 128–137 the composition is skewed to polar residues; the sequence is QPESKSGYRS. A domain III, AAA+ region region spans residues 138 to 354; that stretch reads NVNPKHNFNN…GALNRVIANA (217 aa). Residues glycine 182, glycine 184, lysine 185, and threonine 186 each contribute to the ATP site. Positions 355–474 are domain IV, binds dsDNA; that stretch reads NFTGRAITID…YSNLIRTLST (120 aa).

The protein belongs to the DnaA family. Oligomerizes as a right-handed, spiral filament on DNA at oriC.

The protein resides in the cytoplasm. In terms of biological role, plays an essential role in the initiation and regulation of chromosomal replication. ATP-DnaA binds to the origin of replication (oriC) to initiate formation of the DNA replication initiation complex once per cell cycle. Binds the DnaA box (a 9 base pair repeat at the origin) and separates the double-stranded (ds)DNA. Forms a right-handed helical filament on oriC DNA; dsDNA binds to the exterior of the filament while single-stranded (ss)DNA is stabiized in the filament's interior. The ATP-DnaA-oriC complex binds and stabilizes one strand of the AT-rich DNA unwinding element (DUE), permitting loading of DNA polymerase. After initiation quickly degrades to an ADP-DnaA complex that is not apt for DNA replication. Binds acidic phospholipids. The polypeptide is Chromosomal replication initiator protein DnaA (Photobacterium profundum (strain SS9)).